The chain runs to 297 residues: Leucine-rich repeat-containing protein 25 (297 aa).

Positions 1–25 (MGSIRTRLLWLCLLMLLALLHKSGS) are cleaved as a signal peptide. Over 26–169 (QDLTCMVHPS…SCPPSWGPGT (144 aa)) the chain is Extracellular. 2 N-linked (GlcNAc...) asparagine glycosylation sites follow: Asn-44 and Asn-49. LRR repeat units lie at residues 66–89 (HAQV…DKLE) and 90–113 (KLQT…LRCD). Residues Asn-133 and Asn-152 are each glycosylated (N-linked (GlcNAc...) asparagine). Residues 170–190 (IGALVAGTISLAVAVSGSVLA) form a helical membrane-spanning segment. At 191–297 (WRLLRRRRRA…VYCNLESLGR (107 aa)) the chain is on the cytoplasmic side. A disordered region spans residues 202 to 244 (EHSLSKAQMSPHDIPKPVTDFLPRYSSRRPGPKAPDSPPSRFT). Phosphoserine is present on residues Ser-211, Ser-238, and Ser-267. A Phosphotyrosine modification is found at Tyr-289.

Interacts with RIGI. Interacts with SQSTM1. Interacts with p65/RELA; this interaction promotes the degradation of RELA through autophagy.

The protein resides in the membrane. Its subcellular location is the cytoplasm. Functionally, plays a role in the inhibition of RLR-mediated type I interferon signaling pathway by targeting RIGI for autophagic degradation. Interacts specifically with ISG15-associated RIGI to promote interaction between RIGI and the autophagic cargo receptor p62/SQSTM1 to mediate RIGI degradation via selective autophagy. Plays also a role in the inhibition of NF-kappa-B signaling pathway and inflammatory response by promoting the degradation of p65/RELA. This Mus musculus (Mouse) protein is Leucine-rich repeat-containing protein 25 (Lrrc25).